Reading from the N-terminus, the 355-residue chain is Molybdenum import ATP-binding protein ModC (355 aa).

An ABC transporter domain is found at 1–233 (MTLIVEAKQR…PSAAADRKEA (233 aa)). 31-38 (GRSGSGKT) contacts ATP. A Mop domain is found at 291 to 355 (GLSALNILEG…AIIKTVALEG (65 aa)).

It belongs to the ABC transporter superfamily. Molybdate importer (TC 3.A.1.8) family. In terms of assembly, the complex is composed of two ATP-binding proteins (ModC), two transmembrane proteins (ModB) and a solute-binding protein (ModA).

The protein resides in the cell inner membrane. The catalysed reaction is molybdate(out) + ATP + H2O = molybdate(in) + ADP + phosphate + H(+). Part of the ABC transporter complex ModABC involved in molybdenum import. Responsible for energy coupling to the transport system. This chain is Molybdenum import ATP-binding protein ModC, found in Rhizobium etli (strain ATCC 51251 / DSM 11541 / JCM 21823 / NBRC 15573 / CFN 42).